Reading from the N-terminus, the 389-residue chain is MVSVAEIRQAQRAEGPATILAIGTANPANKVEQATYPDFYFKITNSEHKVELKEKFQRMCDKSMIKSRYMYLTEEILKENPSVCEYMAPSLDARQDMVVVEVPRLGKEAAVKAIKEWGQPKSKITHLIFCTTSGVDMPGADYQLTKLLGLRPYVKRYMMYQQGCFAGGTVLRLAKDLAENNKGARVLVVCSEVTAVTFRGPSDTHLDSLVGQALFGDGAAALIVGSDPVPEIEKPIFEMVWTAQTIAPDSEGAIDGHLREAGLTFHLLKDVPGIVSKNIDKALVEAFQPLNISDYNSIFWIAHPGGPAILDQVEQKLALKPEKMKATRDVLSEYGNMSSACVLFILDEMRKKSAQNGLKTTGEGLDWGVLFGFGPGLTIETVVLHSVAI.

Residue C164 is part of the active site.

The protein belongs to the thiolase-like superfamily. Chalcone/stilbene synthases family.

It catalyses the reaction (E)-4-coumaroyl-CoA + 3 malonyl-CoA + 3 H(+) = 2',4,4',6'-tetrahydroxychalcone + 3 CO2 + 4 CoA. It participates in secondary metabolite biosynthesis; flavonoid biosynthesis. Its function is as follows. The primary product of this enzyme is 4,2',4',6'-tetrahydroxychalcone (also termed naringenin-chalcone or chalcone) which can under specific conditions spontaneously isomerize into naringenin. This chain is Chalcone synthase 5 (CHS5), found in Trifolium subterraneum (Subterranean clover).